A 459-amino-acid chain; its full sequence is tRNA modification GTPase MnmE (459 aa).

Residues R22, E85, and R124 each contribute to the (6S)-5-formyl-5,6,7,8-tetrahydrofolate site. The region spanning 221-380 (GLSTVIVGKP…LEIQIRDLFF (160 aa)) is the TrmE-type G domain. K(+) is bound at residue N231. GTP contacts are provided by residues 231-236 (NVGKSS), 250-256 (TEVAGTT), and 275-278 (DTAG). S235 is a Mg(2+) binding site. T250, V252, and T255 together coordinate K(+). Position 256 (T256) interacts with Mg(2+). K459 contributes to the (6S)-5-formyl-5,6,7,8-tetrahydrofolate binding site.

It belongs to the TRAFAC class TrmE-Era-EngA-EngB-Septin-like GTPase superfamily. TrmE GTPase family. As to quaternary structure, homodimer. Heterotetramer of two MnmE and two MnmG subunits. Requires K(+) as cofactor.

The protein localises to the cytoplasm. Its function is as follows. Exhibits a very high intrinsic GTPase hydrolysis rate. Involved in the addition of a carboxymethylaminomethyl (cmnm) group at the wobble position (U34) of certain tRNAs, forming tRNA-cmnm(5)s(2)U34. This is tRNA modification GTPase MnmE from Staphylococcus aureus (strain Mu3 / ATCC 700698).